A 150-amino-acid chain; its full sequence is UPF0756 membrane protein HAPS_1649 (150 aa).

5 consecutive transmembrane segments (helical) span residues 1–21 (MSLQ…LGIF), 27–46 (VTIS…SKYV), 52–72 (YGIK…LVSG), 82–102 (LINW…WLGG), and 123–143 (IIGV…AGIL).

This sequence belongs to the UPF0756 family.

The protein resides in the cell membrane. This Glaesserella parasuis serovar 5 (strain SH0165) (Haemophilus parasuis) protein is UPF0756 membrane protein HAPS_1649.